Reading from the N-terminus, the 127-residue chain is Gamma-synuclein (127 aa).

Repeat copies occupy residues E20–A30 and E31–G41. Residues E20–S67 form a 4 X 11 AA tandem repeats of [EGSA]-K-T-K-[EQ]-[GQ]-V-X(4) region. A 3; approximate repeat occupies T42–A56. Residues E57 to S67 form repeat 4. A phosphoserine mark is found at S67 and S72. Residues K97 to D127 form a disordered region. S124 carries the post-translational modification Phosphoserine; by BARK1, CaMK2 and CK2.

This sequence belongs to the synuclein family. As to quaternary structure, may be a centrosome-associated protein. Interacts with MYOC; affects its secretion and its aggregation. Post-translationally, phosphorylated. Phosphorylation by GRK5 appears to occur on residues distinct from the residue phosphorylated by other kinases.

The protein resides in the cytoplasm. It localises to the perinuclear region. Its subcellular location is the cytoskeleton. The protein localises to the microtubule organizing center. It is found in the centrosome. The protein resides in the spindle. Functionally, plays a role in neurofilament network integrity. May be involved in modulating axonal architecture during development and in the adult. In vitro, increases the susceptibility of neurofilament-H to calcium-dependent proteases. May also function in modulating the keratin network in skin. Activates the MAPK and Elk-1 signal transduction pathway. This Macaca fascicularis (Crab-eating macaque) protein is Gamma-synuclein (SNCG).